A 205-amino-acid chain; its full sequence is Dephospho-CoA kinase (205 aa).

Residues 5–201 enclose the DPCK domain; the sequence is VVGLTGGIGS…QRYLQLSGNH (197 aa). 13-18 serves as a coordination point for ATP; it reads GSGKTT.

It belongs to the CoaE family.

The protein localises to the cytoplasm. The enzyme catalyses 3'-dephospho-CoA + ATP = ADP + CoA + H(+). The protein operates within cofactor biosynthesis; coenzyme A biosynthesis; CoA from (R)-pantothenate: step 5/5. In terms of biological role, catalyzes the phosphorylation of the 3'-hydroxyl group of dephosphocoenzyme A to form coenzyme A. This Shewanella oneidensis (strain ATCC 700550 / JCM 31522 / CIP 106686 / LMG 19005 / NCIMB 14063 / MR-1) protein is Dephospho-CoA kinase.